The following is an 898-amino-acid chain: Protein SOV1, mitochondrial (898 aa).

The transit peptide at methionine 1–tyrosine 31 directs the protein to the mitochondrion.

It localises to the mitochondrion. The sequence is that of Protein SOV1, mitochondrial (SOV1) from Saccharomyces cerevisiae (strain ATCC 204508 / S288c) (Baker's yeast).